Here is a 136-residue protein sequence, read N- to C-terminus: Protein PsiE (136 aa).

4 consecutive transmembrane segments (helical) span residues 15–35 (ILQTVLNLGLLCLGLILVVFL), 55–75 (YELVEGLVVYFLYFEFIALIV), 82–102 (FHFPLRYFVYIGITAIVRLII), and 108–128 (PLDVLIYSAAILLLVITLWLC).

Belongs to the PsiE family.

The protein resides in the cell inner membrane. The polypeptide is Protein PsiE (Escherichia coli (strain UTI89 / UPEC)).